A 317-amino-acid chain; its full sequence is Putative peptide import ATP-binding protein BruAb2_0797 (317 aa).

Residues 7-250 (LSVRGLAKHY…PQHPYTRALL (244 aa)) enclose the ABC transporter domain. 43–50 (GESGSGKT) is an ATP binding site.

Belongs to the ABC transporter superfamily. In terms of assembly, the complex is composed of two ATP-binding proteins (BruAb2_0796 and BruAb2_0797), two transmembrane proteins (BruAb2_0794) and a solute-binding protein (BruAb2_0792).

The protein resides in the cell inner membrane. Probably part of an ABC transporter complex that could be involved in peptide import. Probably responsible for energy coupling to the transport system. This is Putative peptide import ATP-binding protein BruAb2_0797 from Brucella abortus biovar 1 (strain 9-941).